A 519-amino-acid chain; its full sequence is Protein nucleotidyltransferase YdiU (519 aa).

Residues G101, G103, R104, K124, D136, G137, R194, and R201 each coordinate ATP. The active-site Proton acceptor is D271. Mg(2+) is bound by residues N272 and D281. D281 is a binding site for ATP.

It belongs to the SELO family. Mg(2+) is required as a cofactor. It depends on Mn(2+) as a cofactor.

It catalyses the reaction L-seryl-[protein] + ATP = 3-O-(5'-adenylyl)-L-seryl-[protein] + diphosphate. It carries out the reaction L-threonyl-[protein] + ATP = 3-O-(5'-adenylyl)-L-threonyl-[protein] + diphosphate. The enzyme catalyses L-tyrosyl-[protein] + ATP = O-(5'-adenylyl)-L-tyrosyl-[protein] + diphosphate. The catalysed reaction is L-histidyl-[protein] + UTP = N(tele)-(5'-uridylyl)-L-histidyl-[protein] + diphosphate. It catalyses the reaction L-seryl-[protein] + UTP = O-(5'-uridylyl)-L-seryl-[protein] + diphosphate. It carries out the reaction L-tyrosyl-[protein] + UTP = O-(5'-uridylyl)-L-tyrosyl-[protein] + diphosphate. In terms of biological role, nucleotidyltransferase involved in the post-translational modification of proteins. It can catalyze the addition of adenosine monophosphate (AMP) or uridine monophosphate (UMP) to a protein, resulting in modifications known as AMPylation and UMPylation. In Azoarcus sp. (strain BH72), this protein is Protein nucleotidyltransferase YdiU.